Reading from the N-terminus, the 361-residue chain is tRNA-specific 2-thiouridylase MnmA (361 aa).

ATP is bound by residues Ala8 to Ser15 and Met35. The interaction with target base in tRNA stretch occupies residues Asn95 to Asp97. Cys100 functions as the Nucleophile in the catalytic mechanism. Residues Cys100 and Cys196 are joined by a disulfide bond. Gly124 is a binding site for ATP. The interval Lys146–Gln148 is interaction with tRNA. Catalysis depends on Cys196, which acts as the Cysteine persulfide intermediate. The tract at residues Arg303–Tyr304 is interaction with tRNA.

The protein belongs to the MnmA/TRMU family.

It is found in the cytoplasm. It carries out the reaction S-sulfanyl-L-cysteinyl-[protein] + uridine(34) in tRNA + AH2 + ATP = 2-thiouridine(34) in tRNA + L-cysteinyl-[protein] + A + AMP + diphosphate + H(+). Catalyzes the 2-thiolation of uridine at the wobble position (U34) of tRNA, leading to the formation of s(2)U34. The polypeptide is tRNA-specific 2-thiouridylase MnmA (Chlamydia pneumoniae (Chlamydophila pneumoniae)).